The sequence spans 786 residues: Aculeacin-A acylase (786 aa).

Positions 1 to 22 (MTSSYMRLKAAAIAFGVIVATA) are cleaved as a signal peptide. A propeptide spanning residues 23 to 34 (AVPSPASGREHD) is cleaved from the precursor. The tract at residues 35–130 (GGYAALIRRA…PRDGVRAPCD (96 aa)) is substrate-binding. The propeptide at 215-229 (AAIAAALDGTSAGIG) is spacer peptide. Residues 220–239 (ALDGTSAGIGSNAYGLGAQA) form a possible recognition-sequence of an AAC processing enzyme region. The active-site Nucleophile is S230. The interval 658–689 (ACNGSPASPSTRSVGDIHTDSRGERRIPIHGG) is disordered. Positions 672–684 (GDIHTDSRGERRI) are enriched in basic and acidic residues.

It belongs to the peptidase S45 family. As to quaternary structure, heterodimer of a small subunit and a large subunit processed from the same precursor.

Its subcellular location is the secreted. In terms of biological role, catalyzes the hydrolysis of the palmitoyl moiety of the antifungal antibiotic, aculeacin-A, giving a hexapeptide moiety and a long chain fatty acid. This chain is Aculeacin-A acylase (aac), found in Actinoplanes utahensis.